A 405-amino-acid polypeptide reads, in one-letter code: Tryptophan synthase beta chain (405 aa).

N6-(pyridoxal phosphate)lysine is present on lysine 98.

It belongs to the TrpB family. As to quaternary structure, tetramer of two alpha and two beta chains. The cofactor is pyridoxal 5'-phosphate.

It carries out the reaction (1S,2R)-1-C-(indol-3-yl)glycerol 3-phosphate + L-serine = D-glyceraldehyde 3-phosphate + L-tryptophan + H2O. Its pathway is amino-acid biosynthesis; L-tryptophan biosynthesis; L-tryptophan from chorismate: step 5/5. The beta subunit is responsible for the synthesis of L-tryptophan from indole and L-serine. This is Tryptophan synthase beta chain from Stenotrophomonas maltophilia (strain R551-3).